The sequence spans 366 residues: tRNA/tmRNA (uracil-C(5))-methyltransferase (366 aa).

Positions 190, 218, 223, 239, and 299 each coordinate S-adenosyl-L-methionine. Cysteine 324 acts as the Nucleophile in catalysis. Residue glutamate 358 is the Proton acceptor of the active site.

It belongs to the class I-like SAM-binding methyltransferase superfamily. RNA M5U methyltransferase family. TrmA subfamily.

The catalysed reaction is uridine(54) in tRNA + S-adenosyl-L-methionine = 5-methyluridine(54) in tRNA + S-adenosyl-L-homocysteine + H(+). It catalyses the reaction uridine(341) in tmRNA + S-adenosyl-L-methionine = 5-methyluridine(341) in tmRNA + S-adenosyl-L-homocysteine + H(+). Dual-specificity methyltransferase that catalyzes the formation of 5-methyluridine at position 54 (m5U54) in all tRNAs, and that of position 341 (m5U341) in tmRNA (transfer-mRNA). The polypeptide is tRNA/tmRNA (uracil-C(5))-methyltransferase (Salmonella arizonae (strain ATCC BAA-731 / CDC346-86 / RSK2980)).